The primary structure comprises 237 residues: Probable transcriptional regulatory protein Bpro_2928 (237 aa).

It belongs to the TACO1 family.

The protein resides in the cytoplasm. This Polaromonas sp. (strain JS666 / ATCC BAA-500) protein is Probable transcriptional regulatory protein Bpro_2928.